Consider the following 292-residue polypeptide: Elongation factor Ts (292 aa).

Residues 80-83 (TDFV) form an involved in Mg(2+) ion dislocation from EF-Tu region.

Belongs to the EF-Ts family.

It localises to the cytoplasm. In terms of biological role, associates with the EF-Tu.GDP complex and induces the exchange of GDP to GTP. It remains bound to the aminoacyl-tRNA.EF-Tu.GTP complex up to the GTP hydrolysis stage on the ribosome. In Pediococcus pentosaceus (strain ATCC 25745 / CCUG 21536 / LMG 10740 / 183-1w), this protein is Elongation factor Ts.